A 1393-amino-acid polypeptide reads, in one-letter code: Major capsid protein (1393 aa).

This sequence belongs to the herpesviridae major capsid protein family. As to quaternary structure, homomultimer. Makes the hexons and eleven out of twelve pentons. Interacts with triplex proteins 1/TRX1 and 2/TRX2; adjacent capsomers are linked together in groups of three by triplexes, heterotrimeric complexes composed of one molecule of TRX1 and two molecules of TRX2. Interacts with scaffold protein; this interaction allows efficient MCP transport to the host nucleus. Interacts with capsid vertex component 2/CVC2. Interacts with the small capsomere-interacting protein/SCP.

It is found in the virion. The protein resides in the host nucleus. Functionally, self-assembles to form an icosahedral capsid with a T=16 symmetry, about 200 nm in diameter, and consisting of 150 hexons and 12 pentons (total of 162 capsomers). Hexons form the edges and faces of the capsid and are each composed of six MCP molecules. In contrast, one penton is found at each of the 12 vertices. Eleven of the pentons are MCP pentamers, while the last vertex is occupied by the portal complex. The capsid is surrounded by a layer of proteinaceous material designated the tegument which, in turn, is enclosed in an envelope of host cell-derived lipids containing virus-encoded glycoproteins. The protein is Major capsid protein of Gallus gallus (Chicken).